The primary structure comprises 242 residues: ATP synthase subunit a (242 aa).

Helical transmembrane passes span 31–51, 84–104, 114–134, 140–160, 189–209, and 210–230; these read IYML…FYNW, FIPL…LGMT, IIVT…VGFV, FLTL…MIVI, VIAS…IPLM, and VILI…FTIL.

The protein belongs to the ATPase A chain family. F-type ATPases have 2 components, CF(1) - the catalytic core - and CF(0) - the membrane proton channel. CF(1) has five subunits: alpha(3), beta(3), gamma(1), delta(1), epsilon(1). CF(0) has three main subunits: a(1), b(2) and c(9-12). The alpha and beta chains form an alternating ring which encloses part of the gamma chain. CF(1) is attached to CF(0) by a central stalk formed by the gamma and epsilon chains, while a peripheral stalk is formed by the delta and b chains.

It localises to the cell inner membrane. Its function is as follows. Key component of the proton channel; it plays a direct role in the translocation of protons across the membrane. The sequence is that of ATP synthase subunit a from Rickettsia canadensis (strain McKiel).